The sequence spans 442 residues: Probable glycine dehydrogenase (decarboxylating) subunit 1 (442 aa).

Belongs to the GcvP family. N-terminal subunit subfamily. As to quaternary structure, the glycine cleavage system is composed of four proteins: P, T, L and H. In this organism, the P 'protein' is a heterodimer of two subunits.

The catalysed reaction is N(6)-[(R)-lipoyl]-L-lysyl-[glycine-cleavage complex H protein] + glycine + H(+) = N(6)-[(R)-S(8)-aminomethyldihydrolipoyl]-L-lysyl-[glycine-cleavage complex H protein] + CO2. In terms of biological role, the glycine cleavage system catalyzes the degradation of glycine. The P protein binds the alpha-amino group of glycine through its pyridoxal phosphate cofactor; CO(2) is released and the remaining methylamine moiety is then transferred to the lipoamide cofactor of the H protein. The chain is Probable glycine dehydrogenase (decarboxylating) subunit 1 from Geotalea uraniireducens (strain Rf4) (Geobacter uraniireducens).